We begin with the raw amino-acid sequence, 277 residues long: Alpha carbonic anhydrase 3 (277 aa).

Residues 1–19 (MKTIILFVTFLALSSSSLA) form the signal peptide. Residues 24–259 (TEFHYKPGEI…LNGRLVYLNE (236 aa)) form the Alpha-carbonic anhydrase domain. Residues Cys-49 and Cys-209 are joined by a disulfide bond. N-linked (GlcNAc...) asparagine glycosylation is found at Asn-70 and Asn-107. Positions 117, 119, and 136 each coordinate Zn(2+). Residue 205-206 (TT) participates in substrate binding. The disordered stretch occupies residues 257–277 (LNEQSSPSPTPRLRIPRVGPV).

The protein belongs to the alpha-class carbonic anhydrase family. The cofactor is Zn(2+). In terms of processing, N-glycosylated. Expressed in flowers and siliques.

The protein localises to the plastid. It is found in the chloroplast stroma. The enzyme catalyses hydrogencarbonate + H(+) = CO2 + H2O. Reversible hydration of carbon dioxide. The polypeptide is Alpha carbonic anhydrase 3 (ACA3) (Arabidopsis thaliana (Mouse-ear cress)).